We begin with the raw amino-acid sequence, 337 residues long: Pyruvate dehydrogenase E1 component subunit beta (337 aa).

E73 serves as a coordination point for thiamine diphosphate.

As to quaternary structure, heterodimer of an alpha and a beta chain. Thiamine diphosphate is required as a cofactor.

The enzyme catalyses N(6)-[(R)-lipoyl]-L-lysyl-[protein] + pyruvate + H(+) = N(6)-[(R)-S(8)-acetyldihydrolipoyl]-L-lysyl-[protein] + CO2. In terms of biological role, the pyruvate dehydrogenase complex catalyzes the overall conversion of pyruvate to acetyl-CoA and CO(2). It contains multiple copies of three enzymatic components: pyruvate dehydrogenase (E1), dihydrolipoamide acetyltransferase (E2) and lipoamide dehydrogenase (E3). The polypeptide is Pyruvate dehydrogenase E1 component subunit beta (pdhB) (Leifsonia xyli subsp. xyli (strain CTCB07)).